A 139-amino-acid chain; its full sequence is Large ribosomal subunit protein uL16 (139 aa).

Positions 74 to 94 (LTKKPAETRQGSGKGSPESWV) are disordered.

Belongs to the universal ribosomal protein uL16 family. As to quaternary structure, part of the 50S ribosomal subunit.

In terms of biological role, binds 23S rRNA and is also seen to make contacts with the A and possibly P site tRNAs. The protein is Large ribosomal subunit protein uL16 of Saccharopolyspora erythraea (strain ATCC 11635 / DSM 40517 / JCM 4748 / NBRC 13426 / NCIMB 8594 / NRRL 2338).